The primary structure comprises 181 residues: Large ribosomal subunit protein uL6 (181 aa).

The protein belongs to the universal ribosomal protein uL6 family. As to quaternary structure, part of the 50S ribosomal subunit.

This protein binds to the 23S rRNA, and is important in its secondary structure. It is located near the subunit interface in the base of the L7/L12 stalk, and near the tRNA binding site of the peptidyltransferase center. In Phytoplasma mali (strain AT), this protein is Large ribosomal subunit protein uL6.